Reading from the N-terminus, the 98-residue chain is Putative defensin-like protein 239 (98 aa).

An N-terminal signal peptide occupies residues 1 to 23 (MRYTTSFIGLCFLIFLLKNLVNG). 4 disulfides stabilise this stretch: cysteine 29–cysteine 89, cysteine 39–cysteine 69, cysteine 47–cysteine 86, and cysteine 67–cysteine 88.

This sequence belongs to the DEFL family.

It is found in the secreted. This Arabidopsis thaliana (Mouse-ear cress) protein is Putative defensin-like protein 239 (SCRL17).